The following is a 243-amino-acid chain: Biosynthetic peptidoglycan transglycosylase (243 aa).

A helical membrane pass occupies residues 22–42; that stretch reads LIVLLVLALMSVLQVIVFRFV.

Belongs to the glycosyltransferase 51 family.

The protein resides in the cell inner membrane. The catalysed reaction is [GlcNAc-(1-&gt;4)-Mur2Ac(oyl-L-Ala-gamma-D-Glu-L-Lys-D-Ala-D-Ala)](n)-di-trans,octa-cis-undecaprenyl diphosphate + beta-D-GlcNAc-(1-&gt;4)-Mur2Ac(oyl-L-Ala-gamma-D-Glu-L-Lys-D-Ala-D-Ala)-di-trans,octa-cis-undecaprenyl diphosphate = [GlcNAc-(1-&gt;4)-Mur2Ac(oyl-L-Ala-gamma-D-Glu-L-Lys-D-Ala-D-Ala)](n+1)-di-trans,octa-cis-undecaprenyl diphosphate + di-trans,octa-cis-undecaprenyl diphosphate + H(+). Its pathway is cell wall biogenesis; peptidoglycan biosynthesis. In terms of biological role, peptidoglycan polymerase that catalyzes glycan chain elongation from lipid-linked precursors. In Xylella fastidiosa (strain 9a5c), this protein is Biosynthetic peptidoglycan transglycosylase.